The chain runs to 536 residues: Arylsulfatase K (536 aa).

The N-terminal stretch at 1-24 (MIQKCIALSLFLFSALPEDNIVRA) is a signal peptide. Ca(2+) is bound by residues D42 and C82. The active-site Nucleophile is the C82. Position 82 is a 3-oxoalanine (Cys) (C82). K130 contributes to the substrate binding site. N-linked (GlcNAc...) asparagine glycosylation is present at N195. H253 serves as a coordination point for substrate. The N-linked (GlcNAc...) asparagine glycan is linked to N264. Residues D315 and H316 each contribute to the Ca(2+) site. N377, N416, and N501 each carry an N-linked (GlcNAc...) asparagine glycan.

The protein belongs to the sulfatase family. Ca(2+) is required as a cofactor. Post-translationally, the conversion to 3-oxoalanine (also known as C-formylglycine, FGly), of a serine or cysteine residue in prokaryotes and of a cysteine residue in eukaryotes, is critical for catalytic activity.

Its subcellular location is the secreted. It localises to the lysosome. The catalysed reaction is an aryl sulfate + H2O = a phenol + sulfate + H(+). It catalyses the reaction Hydrolysis of the 2-sulfate groups of the 2-O-sulfo-D-glucuronate residues of chondroitin sulfate, heparin and heparitin sulfate.. In terms of biological role, catalyzes the hydrolysis of pseudosubstrates such as p-nitrocatechol sulfate and p-nitrophenyl sulfate. Catalyzes the hydrolysis of the 2-sulfate groups of the 2-O-sulfo-D-glucuronate residues of chondroitin sulfate, heparin and heparitin sulfate. Acts selectively on 2-sulfoglucuronate and lacks activity against 2-sulfoiduronate. The sequence is that of Arylsulfatase K (arsk) from Xenopus laevis (African clawed frog).